Here is a 288-residue protein sequence, read N- to C-terminus: Homoserine kinase (288 aa).

79–89 contacts ATP; the sequence is PPARGLGSSSA.

The protein belongs to the GHMP kinase family. Homoserine kinase subfamily.

It localises to the cytoplasm. It carries out the reaction L-homoserine + ATP = O-phospho-L-homoserine + ADP + H(+). The protein operates within amino-acid biosynthesis; L-threonine biosynthesis; L-threonine from L-aspartate: step 4/5. In terms of biological role, catalyzes the ATP-dependent phosphorylation of L-homoserine to L-homoserine phosphate. The protein is Homoserine kinase of Listeria monocytogenes serotype 4b (strain F2365).